A 247-amino-acid chain; its full sequence is Fibroblast growth factor 14 (247 aa).

Disordered regions lie at residues 1–37 and 216–247; these read MAAAIASGLIRQKRQAREQHWDRPSASRRRSSPSKNR and ETVPKAGVTPSKSTSASAIMNGGKPVNKCKTT. Positions 15–25 are enriched in basic and acidic residues; that stretch reads QAREQHWDRPS.

This sequence belongs to the heparin-binding growth factors family. In terms of assembly, interacts with SCN8A. Brain and testis; widely distributed in the developing nervous system. In adult, high levels in the granular layer of the cerebellum, less in hippocampus and olfactory bulb.

Its subcellular location is the nucleus. In terms of biological role, probably involved in nervous system development and function. This is Fibroblast growth factor 14 (Fgf14) from Mus musculus (Mouse).